Reading from the N-terminus, the 149-residue chain is MKLTDYVKQVSLEDFGRPFIHHVQWNRRLRSTGGRFFPKDGHLDFNPKVYQELGLDVFRKIVRHELCHYHLYFQGKGYQHKDRDFKELLKAVDGLRFVPSLPNSNSKPIKLYRCQSCQQRYQRKRRIDTQRYRCGLCRGKLLLVNQPED.

The SprT-like domain occupies 4-144 (TDYVKQVSLE…GLCRGKLLLV (141 aa)). Residue histidine 64 coordinates Zn(2+). Residue glutamate 65 is part of the active site. Position 68 (histidine 68) interacts with Zn(2+).

The protein belongs to the SprT family. It depends on Zn(2+) as a cofactor.

It localises to the cytoplasm. The polypeptide is Protein SprT-like (Streptococcus pneumoniae serotype 4 (strain ATCC BAA-334 / TIGR4)).